The chain runs to 315 residues: Calcium homeostasis modulator protein 6 (315 aa).

Topologically, residues 1 to 21 are cytoplasmic; it reads MEKFKAVLDLQIKHRSALGYG. The chain crosses the membrane as a helical span at residues 22 to 37; that stretch reads LVTLLTAGGEKIFSTV. Topologically, residues 38-46 are extracellular; the sequence is VFQCPCTAT. Intrachain disulfides connect C41–C127, C43–C156, and C140–C147. Residues 47 to 68 traverse the membrane as a helical segment; that stretch reads LNLTYGLVFLLVPALALFLLGY. At 69 to 103 the chain is on the cytoplasmic side; the sequence is ALSARTWRLLTGCCSRSASTRSSSGLRSTLVCAQV. Residues 104-128 form a helical membrane-spanning segment; the sequence is SAVAALAPLTWVAVALLGGSFYQCA. The Extracellular portion of the chain corresponds to 129–169; that stretch reads VSGSTRLASYLCKDRNHSCIAKLPQVPCNKQEAEMQEILSQ. Residues 170–192 form a helical membrane-spanning segment; it reads LKAQSQVLGWVLIAAVIFLLLVF. The Cytoplasmic portion of the chain corresponds to 193–315; sequence KCVSRCFSPV…DAAMANTHGV (123 aa).

The protein belongs to the CALHM family. In terms of assembly, oligomerizes to form decameric and undecameric channels.

It localises to the cell membrane. The catalysed reaction is ATP(in) = ATP(out). Its function is as follows. Pore-forming subunit of an ATP-permeable channel. In response to pathogen-derived and proinflammatory stimuli, relocates from intracellular compartments to NK-dendritic cell and NK-macrophage immune synapses where it mediates ATP efflux and NK cell activation involved in antimicrobial and antitumor responses. May assemble to form gap junction channel-like structures with gating and ion conductance likely regulated by membrane lipids and voltage rather than by extracellular calcium levels. The protein is Calcium homeostasis modulator protein 6 of Rattus norvegicus (Rat).